Reading from the N-terminus, the 357-residue chain is Peptide chain release factor 1 (357 aa).

An N5-methylglutamine modification is found at Gln-232.

Belongs to the prokaryotic/mitochondrial release factor family. In terms of processing, methylated by PrmC. Methylation increases the termination efficiency of RF1.

It localises to the cytoplasm. Its function is as follows. Peptide chain release factor 1 directs the termination of translation in response to the peptide chain termination codons UAG and UAA. This Nitratidesulfovibrio vulgaris (strain ATCC 29579 / DSM 644 / CCUG 34227 / NCIMB 8303 / VKM B-1760 / Hildenborough) (Desulfovibrio vulgaris) protein is Peptide chain release factor 1.